A 361-amino-acid chain; its full sequence is POU domain, class 3, transcription factor 4 (361 aa).

2 disordered regions span residues 99 to 131 and 144 to 192; these read PHVA…GQPL and MLEH…PTSD. Polar residues predominate over residues 119–131; it reads APNSSITNSGQPL. The span at 165 to 183 shows a compositional bias: basic and acidic residues; it reads VLREPPDHGELGSHHCQDH. Residues 186-260 enclose the POU-specific domain; the sequence is EETPTSDELE…LLNKWLEEAD (75 aa). At serine 265 the chain carries Phosphoserine. The segment at residues 278–337 is a DNA-binding region (homeobox); the sequence is KRKKRTSIEVSVKGVLETHFLKCPKPAAQEISSLADSLQLEKEVVRVWFCNRRQKEKRMT. The segment at 334 to 361 is disordered; it reads KRMTPPGDQQPHEVYSHTVKTDASCHDL. Residues 343-361 show a composition bias toward basic and acidic residues; it reads QPHEVYSHTVKTDASCHDL.

This sequence belongs to the POU transcription factor family. Class-3 subfamily.

Its subcellular location is the nucleus. In terms of biological role, probable transcription factor which exert its primary action widely during early neural development and in a very limited set of neurons in the mature brain. This chain is POU domain, class 3, transcription factor 4 (Pou3f4), found in Mesocricetus auratus (Golden hamster).